A 180-amino-acid chain; its full sequence is Nucleoside-triphosphatase THEP1 (180 aa).

Residues G9–T16 and L104–G111 each bind ATP.

This sequence belongs to the THEP1 NTPase family.

It carries out the reaction a ribonucleoside 5'-triphosphate + H2O = a ribonucleoside 5'-diphosphate + phosphate + H(+). Functionally, has nucleotide phosphatase activity towards ATP, GTP, CTP, TTP and UTP. May hydrolyze nucleoside diphosphates with lower efficiency. The chain is Nucleoside-triphosphatase THEP1 from Thermococcus kodakarensis (strain ATCC BAA-918 / JCM 12380 / KOD1) (Pyrococcus kodakaraensis (strain KOD1)).